We begin with the raw amino-acid sequence, 288 residues long: METSLKRAAAPAGAVAERTVLRNGGAVRDALAVEEPLEIRVDGERLATTMRTPGADGDLALGFLFAEGIIAGVEDVGTVIHCGRPGEEGYGNVMDVRSAAGMRIDPERVLEGRRFIPVSAACGVCGRLSIDHLMERLRPLPAGEPVPTALVAAGMETLARSQPVFERTGGLHAAVLVGRDGAPVASAEDVGRHNAVDKVVGAALRAGRVGPRAAAASAPALLAVSGRAGFEIVQKAAAAGVPVVASVSAPSSLAVDLARAAGVTLCGFVRGERMNVYANGERLGLTGP.

Residue Cys122 is the Cysteine persulfide intermediate of the active site. Mo-bis(molybdopterin guanine dinucleotide) is bound at residue 268-273; sequence FVRGER.

This sequence belongs to the FdhD family.

It is found in the cytoplasm. In terms of biological role, required for formate dehydrogenase (FDH) activity. Acts as a sulfur carrier protein that transfers sulfur from IscS to the molybdenum cofactor prior to its insertion into FDH. The polypeptide is Sulfur carrier protein FdhD (Anaeromyxobacter dehalogenans (strain 2CP-C)).